The following is a 251-amino-acid chain: HTH-type transcriptional regulator UlaR (251 aa).

The HTH deoR-type domain occupies 3 to 58 (EAQRHQILLEMLAQLGFVTVEKVVERLGISPATARRDINKLGESGKLKKVRNGAEA). A DNA-binding region (H-T-H motif) is located at residues 20-39 (VTVEKVVERLGISPATARRD).

It is found in the cytoplasm. In terms of biological role, represses ulaG and the ulaABCDEF operon. This chain is HTH-type transcriptional regulator UlaR, found in Shigella flexneri.